Reading from the N-terminus, the 388-residue chain is Succinate--CoA ligase [ADP-forming] subunit beta (388 aa).

The ATP-grasp domain occupies 9 to 244; it reads KEILRKYNVP…LDEEDANEIE (236 aa). Residues Lys-46, 53 to 55, Glu-99, Ala-102, and Glu-107 contribute to the ATP site; that span reads GRG. Residues Asn-199 and Asp-213 each contribute to the Mg(2+) site. Substrate is bound by residues Asn-264 and 321 to 323; that span reads GIM.

Belongs to the succinate/malate CoA ligase beta subunit family. As to quaternary structure, heterotetramer of two alpha and two beta subunits. Requires Mg(2+) as cofactor.

The enzyme catalyses succinate + ATP + CoA = succinyl-CoA + ADP + phosphate. The catalysed reaction is GTP + succinate + CoA = succinyl-CoA + GDP + phosphate. It functions in the pathway carbohydrate metabolism; tricarboxylic acid cycle; succinate from succinyl-CoA (ligase route): step 1/1. Its function is as follows. Succinyl-CoA synthetase functions in the citric acid cycle (TCA), coupling the hydrolysis of succinyl-CoA to the synthesis of either ATP or GTP and thus represents the only step of substrate-level phosphorylation in the TCA. The beta subunit provides nucleotide specificity of the enzyme and binds the substrate succinate, while the binding sites for coenzyme A and phosphate are found in the alpha subunit. The polypeptide is Succinate--CoA ligase [ADP-forming] subunit beta (Ralstonia nicotianae (strain ATCC BAA-1114 / GMI1000) (Ralstonia solanacearum)).